We begin with the raw amino-acid sequence, 108 residues long: Circadian clock oscillator protein KaiB (108 aa).

The protein belongs to the KaiB family. May undergo a major conformational rearrangment; in the free state forms homooligomers. When bound to KaiC switches to a monomeric thioredoxin-fold (KaiB(fs)). The active oscillator complex is probably KaiC(6):KaiB(6).

In terms of biological role, component of the KaiBC clock protein complex, which constitutes the main circadian regulator in cyanobacteria; it may modify the ATPase activity of KaiC. May be a metamorphic protein which reversibly switches between an inactive tetrameric fold and a rare, thioredoxin-like monomeric fold (KaiB(fs)). KaiB(fs) binds phospho-KaiC, and perhaps clock output effectors. This Prochlorococcus marinus (strain MIT 9515) protein is Circadian clock oscillator protein KaiB.